The following is a 156-amino-acid chain: Small ribosomal subunit protein uS7 (156 aa).

Belongs to the universal ribosomal protein uS7 family. Part of the 30S ribosomal subunit. Contacts proteins S9 and S11.

Its function is as follows. One of the primary rRNA binding proteins, it binds directly to 16S rRNA where it nucleates assembly of the head domain of the 30S subunit. Is located at the subunit interface close to the decoding center, probably blocks exit of the E-site tRNA. This chain is Small ribosomal subunit protein uS7, found in Nitratidesulfovibrio vulgaris (strain ATCC 29579 / DSM 644 / CCUG 34227 / NCIMB 8303 / VKM B-1760 / Hildenborough) (Desulfovibrio vulgaris).